Here is a 281-residue protein sequence, read N- to C-terminus: MRITIRDIQQMRDRGERIPMVTAYDYTSAQIADRAGIPLILVGDSLGMVVLGYNSTVPVTLDDMIHHTRAVVRGTQKALVIGDLPFLTYTSPEQAMQSAGRMLQEAGAQAVKLEGGVHIAPTIARLVQAGIPVMGHIGFTPQAVNQIGLRVQGRRAAEAQRLLADALAVQEAGAFAIVLELVPAELAQAITERLRIPTIGIGAGAGCSGQVQVWHDMLGLYSDFLPRHAKRYADLATIIAEALSQYASDVRNGTFPGPEHSSRMDPAELAAALGSQDQATE.

Aspartate 44 and aspartate 83 together coordinate Mg(2+). 3-methyl-2-oxobutanoate contacts are provided by residues 44–45, aspartate 83, and lysine 112; that span reads DS. Glutamate 114 is a Mg(2+) binding site. Glutamate 180 serves as the catalytic Proton acceptor. The disordered stretch occupies residues 251 to 281; the sequence is RNGTFPGPEHSSRMDPAELAAALGSQDQATE.

It belongs to the PanB family. Homodecamer; pentamer of dimers. It depends on Mg(2+) as a cofactor.

It localises to the cytoplasm. The enzyme catalyses 3-methyl-2-oxobutanoate + (6R)-5,10-methylene-5,6,7,8-tetrahydrofolate + H2O = 2-dehydropantoate + (6S)-5,6,7,8-tetrahydrofolate. It participates in cofactor biosynthesis; (R)-pantothenate biosynthesis; (R)-pantoate from 3-methyl-2-oxobutanoate: step 1/2. Catalyzes the reversible reaction in which hydroxymethyl group from 5,10-methylenetetrahydrofolate is transferred onto alpha-ketoisovalerate to form ketopantoate. In Chloroflexus aurantiacus (strain ATCC 29364 / DSM 637 / Y-400-fl), this protein is 3-methyl-2-oxobutanoate hydroxymethyltransferase.